The chain runs to 228 residues: Biosynthetic peptidoglycan transglycosylase (228 aa).

Residues 8–28 (GVAALLALFLLYQLWIFGHIV) form a helical membrane-spanning segment.

This sequence belongs to the glycosyltransferase 51 family.

The protein localises to the cell inner membrane. It carries out the reaction [GlcNAc-(1-&gt;4)-Mur2Ac(oyl-L-Ala-gamma-D-Glu-L-Lys-D-Ala-D-Ala)](n)-di-trans,octa-cis-undecaprenyl diphosphate + beta-D-GlcNAc-(1-&gt;4)-Mur2Ac(oyl-L-Ala-gamma-D-Glu-L-Lys-D-Ala-D-Ala)-di-trans,octa-cis-undecaprenyl diphosphate = [GlcNAc-(1-&gt;4)-Mur2Ac(oyl-L-Ala-gamma-D-Glu-L-Lys-D-Ala-D-Ala)](n+1)-di-trans,octa-cis-undecaprenyl diphosphate + di-trans,octa-cis-undecaprenyl diphosphate + H(+). The protein operates within cell wall biogenesis; peptidoglycan biosynthesis. In terms of biological role, peptidoglycan polymerase that catalyzes glycan chain elongation from lipid-linked precursors. The polypeptide is Biosynthetic peptidoglycan transglycosylase (Laribacter hongkongensis (strain HLHK9)).